A 347-amino-acid chain; its full sequence is Olfactory receptor 13C3 (347 aa).

Residues 1 to 55 (MIVQLICTVCFLAVNTFHVRSSFDFLKADDMGEINQTLVSEFLLLGLSGYPKIEI) lie on the Extracellular side of the membrane. N-linked (GlcNAc...) asparagine glycosylation occurs at N35. The chain crosses the membrane as a helical span at residues 56 to 76 (VYFALILVMYLVILIGNGVLI). At 77 to 84 (IASIFDSH) the chain is on the cytoplasmic side. The chain crosses the membrane as a helical span at residues 85–105 (FHTPMYFFLGNLSFLDICYTS). The Extracellular portion of the chain corresponds to 106-129 (SSVPSTLVSLISKKRNISFSGCAV). C127 and C219 are oxidised to a cystine. The chain crosses the membrane as a helical span at residues 130-150 (QMFFGFAMGSTECLLLGMMAF). Topologically, residues 151 to 169 (DRYVAICNPLRYPIILSKV) are cytoplasmic. A helical transmembrane segment spans residues 170–190 (AYVLMASVSWLSGGINSAVQT). Over 191 to 227 (LLAMRLPFCGNNIINHFACEILAVLKLACADISLNII) the chain is Extracellular. A helical membrane pass occupies residues 228–247 (TMVISNMAFLVLPLMVIFFS). Residues 248–267 (YMFILYTILQMNSATGRRKA) lie on the Cytoplasmic side of the membrane. A helical membrane pass occupies residues 268–288 (FSTCSAHLTVVIIFYGTIFFM). Over 289-307 (YAKPKSQDLIGEEKLQALD) the chain is Extracellular. Residues 308 to 328 (KLISLFYGVVTPMLNPILYSL) form a helical membrane-spanning segment. Residues 329–347 (RNKDVKAAVKYLLNKKPIH) lie on the Cytoplasmic side of the membrane.

It belongs to the G-protein coupled receptor 1 family.

Its subcellular location is the cell membrane. In terms of biological role, odorant receptor. The polypeptide is Olfactory receptor 13C3 (OR13C3) (Homo sapiens (Human)).